The chain runs to 173 residues: MAIILGIDPGSRITGYGVIRQVGRQLTYLGSGCIRTKVDDLPSRLKLIYAGVTEIITQFQPDYFAIEQVFMAKNADSALKLGQARGVAIVAAVNRELPVFEYAARQVKQTVVGIGSAEKSQVQHMVRTLLKLPANPQADAADALAIAITHCHVSQNAMQMSESRLNLARGRLR.

Residues D8, E67, and D139 contribute to the active site. D8, E67, and D139 together coordinate Mg(2+).

The protein belongs to the RuvC family. As to quaternary structure, homodimer which binds Holliday junction (HJ) DNA. The HJ becomes 2-fold symmetrical on binding to RuvC with unstacked arms; it has a different conformation from HJ DNA in complex with RuvA. In the full resolvosome a probable DNA-RuvA(4)-RuvB(12)-RuvC(2) complex forms which resolves the HJ. Mg(2+) serves as cofactor.

The protein resides in the cytoplasm. The enzyme catalyses Endonucleolytic cleavage at a junction such as a reciprocal single-stranded crossover between two homologous DNA duplexes (Holliday junction).. The RuvA-RuvB-RuvC complex processes Holliday junction (HJ) DNA during genetic recombination and DNA repair. Endonuclease that resolves HJ intermediates. Cleaves cruciform DNA by making single-stranded nicks across the HJ at symmetrical positions within the homologous arms, yielding a 5'-phosphate and a 3'-hydroxyl group; requires a central core of homology in the junction. The consensus cleavage sequence is 5'-(A/T)TT(C/G)-3'. Cleavage occurs on the 3'-side of the TT dinucleotide at the point of strand exchange. HJ branch migration catalyzed by RuvA-RuvB allows RuvC to scan DNA until it finds its consensus sequence, where it cleaves and resolves the cruciform DNA. This is Crossover junction endodeoxyribonuclease RuvC from Salmonella arizonae (strain ATCC BAA-731 / CDC346-86 / RSK2980).